The sequence spans 40 residues: Muscarinic m1-toxin3 (40 aa).

The cysteines at positions 3 and 24 are disulfide-linked.

It belongs to the three-finger toxin family. Short-chain subfamily. Aminergic toxin sub-subfamily. As to quaternary structure, monomer. Post-translationally, contains 4 disulfide bonds. As to expression, expressed by the venom gland.

The protein resides in the secreted. Functionally, binds irreversibly and specifically to M1 (CHRM1) muscarinic acetylcholine receptors, blocking further binding of antagonists and preventing the action of agonists. The sequence is that of Muscarinic m1-toxin3 from Dendroaspis angusticeps (Eastern green mamba).